A 113-amino-acid chain; its full sequence is Ig heavy chain V region 36-60 (113 aa).

This chain is Ig heavy chain V region 36-60, found in Mus musculus (Mouse).